The chain runs to 413 residues: Type IV pilus assembly protein TapC (413 aa).

Helical transmembrane passes span Tyr180–Ile200, Phe227–Val247, Leu286–Ala306, and Ile386–Phe406.

The protein belongs to the GSP F family.

Its subcellular location is the cell inner membrane. Functionally, involved in the translocation of the type IV pilin. The sequence is that of Type IV pilus assembly protein TapC (tapC) from Aeromonas hydrophila.